A 171-amino-acid chain; its full sequence is Large ribosomal subunit protein bL9 (171 aa).

Belongs to the bacterial ribosomal protein bL9 family.

In terms of biological role, binds to the 23S rRNA. This chain is Large ribosomal subunit protein bL9, found in Rickettsia africae (strain ESF-5).